Here is a 358-residue protein sequence, read N- to C-terminus: Extracellular phospholipase C (358 aa).

It is found in the secreted. In Dickeya chrysanthemi (Pectobacterium chrysanthemi), this protein is Extracellular phospholipase C (plcA).